Consider the following 124-residue polypeptide: MARLVGVDLPRDKRMEVALTYIYGIGRTRANEILEATGIERDLRTRDLTDDQLTHLRDYIEANLKVEGDLRREVQADIRRKMEIGCYQGLRHRRGLPVRGQRTKTNARTRKGPKRTIAGKKKAR.

Residues 98 to 124 form a disordered region; the sequence is VRGQRTKTNARTRKGPKRTIAGKKKAR.

Belongs to the universal ribosomal protein uS13 family. As to quaternary structure, part of the 30S ribosomal subunit. Forms a loose heterodimer with protein S19. Forms two bridges to the 50S subunit in the 70S ribosome.

Located at the top of the head of the 30S subunit, it contacts several helices of the 16S rRNA. In the 70S ribosome it contacts the 23S rRNA (bridge B1a) and protein L5 of the 50S subunit (bridge B1b), connecting the 2 subunits; these bridges are implicated in subunit movement. Contacts the tRNAs in the A and P-sites. In Mycobacterium leprae (strain Br4923), this protein is Small ribosomal subunit protein uS13.